The chain runs to 427 residues: UPF0229 protein YeaH (427 aa).

Residues 79–90 (NDHFVQNDRIER) are compositionally biased toward basic and acidic residues. A disordered region spans residues 79–110 (NDHFVQNDRIERPQGGGGGSGSGQGQASQDGE). Gly residues predominate over residues 92-102 (QGGGGGSGSGQ).

It belongs to the UPF0229 family.

The chain is UPF0229 protein YeaH from Escherichia coli O127:H6 (strain E2348/69 / EPEC).